We begin with the raw amino-acid sequence, 865 residues long: Bifunctional uridylyltransferase/uridylyl-removing enzyme (865 aa).

Residues 1 to 318 (MPHVDLNPLK…FPRPDSDARL (318 aa)) form a uridylyltransferase region. Positions 319 to 675 (IDDDFRNLRE…VRPTEHGEGL (357 aa)) are uridylyl-removing. The HD domain maps to 437–559 (VDQHTLAVVR…VGDERRLAAL (123 aa)). ACT domains lie at 676–762 (QVMV…RLPH) and 789–865 (RLSV…QQAA). Residues 747–767 (DPHAARHAHAPRRLPHSHARR) are disordered. Residues 751–767 (ARHAHAPRRLPHSHARR) are compositionally biased toward basic residues.

It belongs to the GlnD family. Mg(2+) serves as cofactor.

The enzyme catalyses [protein-PII]-L-tyrosine + UTP = [protein-PII]-uridylyl-L-tyrosine + diphosphate. It carries out the reaction [protein-PII]-uridylyl-L-tyrosine + H2O = [protein-PII]-L-tyrosine + UMP + H(+). Its activity is regulated as follows. Uridylyltransferase (UTase) activity is inhibited by glutamine, while glutamine activates uridylyl-removing (UR) activity. Its function is as follows. Modifies, by uridylylation and deuridylylation, the PII regulatory proteins (GlnB and homologs), in response to the nitrogen status of the cell that GlnD senses through the glutamine level. Under low glutamine levels, catalyzes the conversion of the PII proteins and UTP to PII-UMP and PPi, while under higher glutamine levels, GlnD hydrolyzes PII-UMP to PII and UMP (deuridylylation). Thus, controls uridylylation state and activity of the PII proteins, and plays an important role in the regulation of nitrogen assimilation and metabolism. The sequence is that of Bifunctional uridylyltransferase/uridylyl-removing enzyme from Bordetella bronchiseptica (strain ATCC BAA-588 / NCTC 13252 / RB50) (Alcaligenes bronchisepticus).